We begin with the raw amino-acid sequence, 444 residues long: Adenine permease AdeQ (444 aa).

Topologically, residues 1-29 (MNNDNTDYVSNESGTLSRLFKLPQHGTTV) are cytoplasmic. Residues 30–53 (RTELIAGMTTFLTMVYIVFVNPQI) form a helical membrane-spanning segment. Residues 54 to 63 (LGAAQMDPKV) lie on the Periplasmic side of the membrane. The helical transmembrane segment at 64–82 (VFVTTCLIAGIGSIAMGIF) threads the bilayer. Over 83–84 (AN) the chain is Cytoplasmic. A discontinuously helical transmembrane segment spans residues 85–101 (LPVALAPAMGLNAFFAF). The Periplasmic segment spans residues 102 to 113 (VVVGAMGISWQT). The chain crosses the membrane as a helical span at residues 114–133 (GMGAIFWGAVGLFLLTLFRI). Residues 134-145 (RYWMISNIPLSL) lie on the Cytoplasmic side of the membrane. The chain crosses the membrane as a helical span at residues 146–166 (RIGITSGIGLFIALMGLKNTG). The Periplasmic portion of the chain corresponds to 167 to 182 (VIVANKDTLVMIGDLS). A helical transmembrane segment spans residues 183–200 (SHGVLLGILGFFIITVLS). Residues 201–204 (SRHF) lie on the Cytoplasmic side of the membrane. A helical transmembrane segment spans residues 205 to 223 (HAAVLVSIVVTSCCGLFFG). Residues 224-251 (DVHFSGVYSIPPDISGVIGEVDLSGALT) lie on the Periplasmic side of the membrane. The chain crosses the membrane as a helical span at residues 252–280 (LELAGIIFSFMLINLFDSSGTLIGVTDKA). At 281-293 (GLIDGNGKFPNMN) the chain is on the cytoplasmic side. The helical transmembrane segment at 294–309 (KALYVDSVSSVAGAFI) threads the bilayer. Residues 310 to 311 (GT) lie on the Periplasmic side of the membrane. The discontinuously helical transmembrane segment at 312–327 (SSVTAYIESTSGVAVG) threads the bilayer. Over 328–331 (GRTG) the chain is Cytoplasmic. A helical transmembrane segment spans residues 332–346 (LTAVVVGVMFLLVMF). Residues 347–357 (FSPLVAIVPPY) lie on the Periplasmic side of the membrane. The chain crosses the membrane as a helical span at residues 358–377 (ATAGALIFVGVLMTSSLARV). Over 378 to 382 (NWDDF) the chain is Cytoplasmic. The segment at residues 383 to 418 (TESVPAFITTVMMPFTFSITEGIALGFMSYCIMKVC) is an intramembrane region (discontinuously helical). Over 419 to 444 (TGRWRDLNLCVVVVAALFALKIILVD) the chain is Cytoplasmic.

The protein belongs to the nucleobase:cation symporter-2 (NCS2) (TC 2.A.40) family. Azg-like subfamily.

Its subcellular location is the cell inner membrane. In terms of biological role, high-affinity transporter for adenine. The chain is Adenine permease AdeQ (adeQ) from Escherichia coli (strain K12).